Consider the following 58-residue polypeptide: UPF0337 protein OB2685 (58 aa).

2 stretches are compositionally biased toward basic and acidic residues: residues 1–22 (MSDGMKDKAKAIGKKIKGEAKD) and 30–46 (DPQRKAEGKRDKAKGEA). The disordered stretch occupies residues 1–58 (MSDGMKDKAKAIGKKIKGEAKDQWGSATDDPQRKAEGKRDKAKGEAQDTIADAKNNNK).

This sequence belongs to the UPF0337 (CsbD) family.

This Oceanobacillus iheyensis (strain DSM 14371 / CIP 107618 / JCM 11309 / KCTC 3954 / HTE831) protein is UPF0337 protein OB2685.